We begin with the raw amino-acid sequence, 230 residues long: MTPLRQLISLLHLASPALPIGGFSYSQGLEAAIDIGCVRDADTAERWIRDSLLYVQAQCEAPLWLLLHRGWQAMDVDAVREWNGWFHATRETAELRLETEQMGWSLAKLVGQMGWGGDALREHLAVISPVCLPTAFAATCVALEIDEREGLAAYCFNWAENQVAAAIKAVPLGQVAGQHMLRRLHEAVLMTVDEAVQRAAETPPRLSTFSPMLGLLSSRHETQYSRLFRS.

This sequence belongs to the UreF family. As to quaternary structure, ureD, UreF and UreG form a complex that acts as a GTP-hydrolysis-dependent molecular chaperone, activating the urease apoprotein by helping to assemble the nickel containing metallocenter of UreC. The UreE protein probably delivers the nickel.

The protein resides in the cytoplasm. Required for maturation of urease via the functional incorporation of the urease nickel metallocenter. The protein is Urease accessory protein UreF of Cupriavidus pinatubonensis (strain JMP 134 / LMG 1197) (Cupriavidus necator (strain JMP 134)).